The sequence spans 29 residues: U-homostoxin-Hdu1a (29 aa).

Threonine 1 is a glycosylation site (O-linked (GlcNAc...) threonine). Disulfide bonds link cysteine 7–cysteine 19 and cysteine 10–cysteine 25.

This sequence belongs to the sea anemone BBH family.

The protein resides in the secreted. Its subcellular location is the nematocyst. The sequence is that of U-homostoxin-Hdu1a from Homostichanthus duerdeni (Sea anemone).